Consider the following 334-residue polypeptide: Ketol-acid reductoisomerase (NADP(+)) (334 aa).

One can recognise a KARI N-terminal Rossmann domain in the interval 2–181; that stretch reads TKVYYDQSVE…GATRAGVIET (180 aa). NADP(+) contacts are provided by residues 25-28, R48, S52, and 82-85; these read YGSQ and DEIQ. The active site involves H107. NADP(+) is bound at residue G133. In terms of domain architecture, KARI C-terminal knotted spans 182–327; sequence TFKEETETDL…RELRKMMPFI (146 aa). Mg(2+) is bound by residues D190, E194, E226, and E230. Substrate is bound at residue S251.

Belongs to the ketol-acid reductoisomerase family. The cofactor is Mg(2+).

It carries out the reaction (2R)-2,3-dihydroxy-3-methylbutanoate + NADP(+) = (2S)-2-acetolactate + NADPH + H(+). It catalyses the reaction (2R,3R)-2,3-dihydroxy-3-methylpentanoate + NADP(+) = (S)-2-ethyl-2-hydroxy-3-oxobutanoate + NADPH + H(+). The protein operates within amino-acid biosynthesis; L-isoleucine biosynthesis; L-isoleucine from 2-oxobutanoate: step 2/4. Its pathway is amino-acid biosynthesis; L-valine biosynthesis; L-valine from pyruvate: step 2/4. Functionally, involved in the biosynthesis of branched-chain amino acids (BCAA). Catalyzes an alkyl-migration followed by a ketol-acid reduction of (S)-2-acetolactate (S2AL) to yield (R)-2,3-dihydroxy-isovalerate. In the isomerase reaction, S2AL is rearranged via a Mg-dependent methyl migration to produce 3-hydroxy-3-methyl-2-ketobutyrate (HMKB). In the reductase reaction, this 2-ketoacid undergoes a metal-dependent reduction by NADPH to yield (R)-2,3-dihydroxy-isovalerate. The chain is Ketol-acid reductoisomerase (NADP(+)) from Staphylococcus haemolyticus (strain JCSC1435).